Consider the following 651-residue polypeptide: Translation factor GUF1 homolog, mitochondrial (651 aa).

A mitochondrion-targeting transit peptide spans 1–26 (MAVTRAAAPMVGNCSSAMLIIGRRYF). One can recognise a tr-type G domain in the interval 51-228 (KKIRNFGIVA…AVVERLPPPK (178 aa)). GTP is bound by residues 60–67 (AHVDHGKS), 121–125 (DTPGH), and 175–178 (NKVD).

The protein belongs to the TRAFAC class translation factor GTPase superfamily. Classic translation factor GTPase family. LepA subfamily.

It localises to the mitochondrion inner membrane. It carries out the reaction GTP + H2O = GDP + phosphate + H(+). Its function is as follows. Promotes mitochondrial protein synthesis. May act as a fidelity factor of the translation reaction, by catalyzing a one-codon backward translocation of tRNAs on improperly translocated ribosomes. Binds to mitochondrial ribosomes in a GTP-dependent manner. This is Translation factor GUF1 homolog, mitochondrial from Brugia malayi (Filarial nematode worm).